The following is a 305-amino-acid chain: tRNA dimethylallyltransferase (305 aa).

8–15 (GPTAVGKT) lines the ATP pocket. A substrate-binding site is contributed by 10–15 (TAVGKT). An interaction with substrate tRNA region spans residues 33 to 36 (DSRQ).

The protein belongs to the IPP transferase family. As to quaternary structure, monomer. Mg(2+) is required as a cofactor.

It carries out the reaction adenosine(37) in tRNA + dimethylallyl diphosphate = N(6)-dimethylallyladenosine(37) in tRNA + diphosphate. Catalyzes the transfer of a dimethylallyl group onto the adenine at position 37 in tRNAs that read codons beginning with uridine, leading to the formation of N6-(dimethylallyl)adenosine (i(6)A). In Thermotoga sp. (strain RQ2), this protein is tRNA dimethylallyltransferase.